The chain runs to 1314 residues: Angiotensin-converting enzyme (1314 aa).

The signal sequence occupies residues 1–35 (MGAASGQRGQGPPSPLLLLWLSLLLLLLPPSPAPA). At 36–1265 (LDPGLQPGNF…LEPQQARVGQ (1230 aa)) the chain is on the extracellular side. N-linked (GlcNAc...) asparagine glycosylation is found at Asn-44, Asn-60, Asn-80, Asn-117, and Asn-166. 2 consecutive Peptidase M2 domains span residues 46–630 (SADE…LGWP) and 649–1228 (VTDE…LGWP). A disulfide bridge connects residues Cys-163 and Cys-171. Tyr-237 contacts chloride. N-linked (GlcNAc...) asparagine glycosylation occurs at Asn-324. Cys-365 and Cys-383 are oxidised to a cystine. Zn(2+) is bound at residue His-396. Residue Glu-397 is the Proton acceptor 1 of the active site. Zn(2+) is bound by residues His-400 and Glu-424. Asn-515 is a glycosylation site (N-linked (GlcNAc...) asparagine). His-526 functions as the Proton donor 1 in the catalytic mechanism. Arg-535 contributes to the chloride binding site. Cys-551 and Cys-563 are oxidised to a cystine. Asn-683, Asn-701, Asn-720, and Asn-766 each carry an N-linked (GlcNAc...) asparagine glycan. A disulfide bond links Cys-763 and Cys-769. Chloride contacts are provided by Arg-797 and Tyr-835. N-linked (GlcNAc...) asparagine glycosylation occurs at Asn-948. An intrachain disulfide couples Cys-963 to Cys-981. Position 994 (His-994) interacts with Zn(2+). Glu-995 (proton acceptor 2) is an active-site residue. Positions 998 and 1022 each coordinate Zn(2+). The chloride site is built by Trp-1096 and Arg-1100. The Proton donor 2 role is filled by His-1124. Position 1133 (Arg-1133) interacts with chloride. A disulfide bond links Cys-1149 and Cys-1161. Residue Asn-1197 is glycosylated (N-linked (GlcNAc...) asparagine). A juxtamembrane stalk region spans residues 1221 to 1262 (HGETLGWPEYNWTPNTARSEGPFPESGRVNFLGMYLEPQQAR). The chain crosses the membrane as a helical span at residues 1266–1282 (WVLLFLGVSLLVATLGL). The Cytoplasmic portion of the chain corresponds to 1283-1314 (THRLFSIRQHGHSLHRPHRGPQFGSEVELRHS). The interval 1293–1314 (GHSLHRPHRGPQFGSEVELRHS) is disordered. Phosphoserine is present on Ser-1307.

It belongs to the peptidase M2 family. In terms of assembly, monomer and homodimer; homodimerizes following binding to an inhibitor. Interacts with calmodulin (CALM1, CALM2 or CALM3); interaction takes place in the cytoplasmic region and regulates phosphorylation and proteolytic cleavage. It depends on Zn(2+) as a cofactor. Requires chloride as cofactor. Post-translationally, produced following proteolytic cleavage by secretase enzymes that cleave the transmembrane form in the juxtamembrane stalk region upstream of the transmembrane region. Cleavage can take place at different sites of the juxtamembrane stalk region. In terms of processing, phosphorylated by CK2 on Ser-1307; which allows membrane retention. Phosphorylated on tyrosine residues on its extracellular part, promoting cleavage by secretase enzymes and formation of the soluble form (Angiotensin-converting enzyme, soluble form). In terms of tissue distribution, widely expressed with dominant expression in lung and kidney.

The protein resides in the cell membrane. Its subcellular location is the cytoplasm. It localises to the secreted. The catalysed reaction is Release of a C-terminal dipeptide, oligopeptide-|-Xaa-Yaa, when Xaa is not Pro, and Yaa is neither Asp nor Glu. Thus, conversion of angiotensin I to angiotensin II, with increase in vasoconstrictor activity, but no action on angiotensin II.. The enzyme catalyses angiotensin I + H2O = L-histidyl-L-leucine + angiotensin II. It catalyses the reaction bradykinin + H2O = L-Phe-L-Arg + bradykinin(1-7). It carries out the reaction substance P + H2O = substance P(1-9) + L-Leu-L-Met-NH2. The catalysed reaction is substance P + H2O = substance P(1-8) + Gly-L-Leu-L-Met-NH2. The enzyme catalyses substance P + H2O = L-Phe-L-Phe-Gly-L-Leu-L-Met-NH2 + substance P(1-6). It catalyses the reaction neurotensin + H2O = neurotensin(1-11) + L-isoleucyl-L-leucine. It carries out the reaction goralatide + H2O = N-acetyl-L-seryl-L-aspartate + L-lysyl-L-proline. The catalysed reaction is Met-enkephalin + H2O = L-phenylalanyl-L-methionine + L-tyrosylglycylglycine. The enzyme catalyses Leu-enkephalin + H2O = L-tyrosylglycylglycine + L-phenylalanyl-L-leucine. It catalyses the reaction Met-enkephalin-Arg-Phe + H2O = L-arginyl-L-phenylalanine + Met-enkephalin. Its activity is regulated as follows. The dipeptidyl carboxypeptidase activity is strongly activated by chloride. The dipeptidyl carboxypeptidase activity is specifically inhibited by lisinopril, captopril and enalaprilat. With respect to regulation, strongly inhibited by lisinopril and captopril. In terms of biological role, dipeptidyl carboxypeptidase that removes dipeptides from the C-terminus of a variety of circulating hormones, such as angiotensin I, bradykinin or enkephalins, thereby playing a key role in the regulation of blood pressure, electrolyte homeostasis or synaptic plasticity. Composed of two similar catalytic domains, each possessing a functional active site, with different selectivity for substrates. Plays a major role in the angiotensin-renin system that regulates blood pressure and sodium retention by the kidney by converting angiotensin I to angiotensin II, resulting in an increase of the vasoconstrictor activity of angiotensin. Also able to inactivate bradykinin, a potent vasodilator, and therefore enhance the blood pressure response. Acts as a regulator of synaptic transmission by mediating cleavage of neuropeptide hormones, such as substance P, neurotensin or enkephalins. Catalyzes degradation of different enkephalin neuropeptides (Met-enkephalin, Leu-enkephalin, Met-enkephalin-Arg-Phe and possibly Met-enkephalin-Arg-Gly-Leu). Acts as a regulator of synaptic plasticity in the nucleus accumbens of the brain by mediating cleavage of Met-enkephalin-Arg-Phe, a strong ligand of Mu-type opioid receptor OPRM1, into Met-enkephalin. Met-enkephalin-Arg-Phe cleavage by ACE decreases activation of OPRM1, leading to long-term synaptic potentiation of glutamate release. Also acts as a regulator of hematopoietic stem cell differentiation by mediating degradation of hemoregulatory peptide N-acetyl-SDKP (AcSDKP). Acts as a regulator of cannabinoid signaling pathway by mediating degradation of hemopressin, an antagonist peptide of the cannabinoid receptor CNR1. Involved in amyloid-beta metabolism by catalyzing degradation of Amyloid-beta protein 40 and Amyloid-beta protein 42 peptides, thereby preventing plaque formation. Catalyzes cleavage of cholecystokinin (maturation of Cholecystokinin-8 and Cholecystokinin-5) and Gonadoliberin-1 (both maturation and degradation) hormones. Degradation of hemoregulatory peptide N-acetyl-SDKP (AcSDKP) and amyloid-beta proteins is mediated by the N-terminal catalytic domain, while angiotensin I and cholecystokinin cleavage is mediated by the C-terminal catalytic region. Its function is as follows. Soluble form that is released in blood plasma and other body fluids following proteolytic cleavage in the juxtamembrane stalk region. Functionally, isoform produced by alternative promoter usage that is specifically expressed in spermatocytes and adult testis, and which is required for male fertility. In contrast to somatic isoforms, only contains one catalytic domain. Acts as a dipeptidyl carboxypeptidase that removes dipeptides from the C-terminus of substrates. The identity of substrates that are needed for male fertility is unknown. May also have a glycosidase activity which releases GPI-anchored proteins from the membrane by cleaving the mannose linkage in the GPI moiety. The GPIase activity was reported to be essential for the egg-binding ability of the sperm. This activity is however unclear and has been challenged by other groups, suggesting that it may be indirect. The polypeptide is Angiotensin-converting enzyme (Mesocricetus auratus (Golden hamster)).